The primary structure comprises 427 residues: Serine--tRNA ligase (427 aa).

L-serine is bound at residue 230–232 (TSE). 261-263 (RSE) lines the ATP pocket. Position 284 (E284) interacts with L-serine. Residue 348 to 351 (EISS) participates in ATP binding. An L-serine-binding site is contributed by S384.

It belongs to the class-II aminoacyl-tRNA synthetase family. Type-1 seryl-tRNA synthetase subfamily. Homodimer. The tRNA molecule binds across the dimer.

It localises to the cytoplasm. The catalysed reaction is tRNA(Ser) + L-serine + ATP = L-seryl-tRNA(Ser) + AMP + diphosphate + H(+). It catalyses the reaction tRNA(Sec) + L-serine + ATP = L-seryl-tRNA(Sec) + AMP + diphosphate + H(+). It functions in the pathway aminoacyl-tRNA biosynthesis; selenocysteinyl-tRNA(Sec) biosynthesis; L-seryl-tRNA(Sec) from L-serine and tRNA(Sec): step 1/1. Its function is as follows. Catalyzes the attachment of serine to tRNA(Ser). Is also able to aminoacylate tRNA(Sec) with serine, to form the misacylated tRNA L-seryl-tRNA(Sec), which will be further converted into selenocysteinyl-tRNA(Sec). The sequence is that of Serine--tRNA ligase from Desulforapulum autotrophicum (strain ATCC 43914 / DSM 3382 / VKM B-1955 / HRM2) (Desulfobacterium autotrophicum).